A 415-amino-acid polypeptide reads, in one-letter code: MAVKPRRNAVVVDVGGVKVGGTHPIVVQSMTNTDTADVASTVNQVMALARAGSELVRVTVNTEAAAAAVPKIVDACAAFGVRVPIIGDFHYNGHLLLKKYPECARALAKYRINPGNSDIGRKTDDNFRTMIEVAIENRKPVRIGVNWGSLDSALLTRMMDENSLLPEPKDAREVTLDAMVASAVQSARAAERHGLAHDQIILSAKVSGVQDLIDVYRALAAVCDYPLHLGLTEAGLGSKGIVATTAALAPVLQDGIGDTIRTSLTPMPNGDRTEEVIVSQQILQSLGIRSFTPQVTACPGCGRTTSTFFQEMADEIQTYLRVQMPSWKATHPGVETMKVAVMGCVVNGPGESKHSNIGISLPGTFEEPKAPVYVDGRLMTTLKGDRIVAEFLEILNEYVDTHYAIAGEPELVSGD.

Residues Cys-298, Cys-301, Cys-344, and Glu-351 each coordinate [4Fe-4S] cluster.

Belongs to the IspG family. It depends on [4Fe-4S] cluster as a cofactor.

It carries out the reaction (2E)-4-hydroxy-3-methylbut-2-enyl diphosphate + oxidized [flavodoxin] + H2O + 2 H(+) = 2-C-methyl-D-erythritol 2,4-cyclic diphosphate + reduced [flavodoxin]. It participates in isoprenoid biosynthesis; isopentenyl diphosphate biosynthesis via DXP pathway; isopentenyl diphosphate from 1-deoxy-D-xylulose 5-phosphate: step 5/6. Converts 2C-methyl-D-erythritol 2,4-cyclodiphosphate (ME-2,4cPP) into 1-hydroxy-2-methyl-2-(E)-butenyl 4-diphosphate. This Solibacter usitatus (strain Ellin6076) protein is 4-hydroxy-3-methylbut-2-en-1-yl diphosphate synthase (flavodoxin).